The following is a 182-amino-acid chain: Ribulose bisphosphate carboxylase small subunit, chloroplastic (182 aa).

A chloroplast-targeting transit peptide spans 1 to 58 (MASSMISSATVATVSRATPAQATMVAPFTGLKSTAAFPATRKSNNDITSLASNGGRVQ).

The protein belongs to the RuBisCO small chain family. In terms of assembly, heterohexadecamer of 8 large and 8 small subunits.

The protein resides in the plastid. The protein localises to the chloroplast. RuBisCO catalyzes two reactions: the carboxylation of D-ribulose 1,5-bisphosphate, the primary event in carbon dioxide fixation, as well as the oxidative fragmentation of the pentose substrate. Both reactions occur simultaneously and in competition at the same active site. Although the small subunit is not catalytic it is essential for maximal activity. This chain is Ribulose bisphosphate carboxylase small subunit, chloroplastic, found in Fagus crenata (Japanese beech).